The chain runs to 338 residues: RNA 3'-terminal phosphate cyclase (338 aa).

Residues Gln-103 and 283–287 (YLADQ) each bind ATP. The active-site Tele-AMP-histidine intermediate is His-308.

It belongs to the RNA 3'-terminal cyclase family. Type 1 subfamily.

The protein localises to the cytoplasm. The catalysed reaction is a 3'-end 3'-phospho-ribonucleotide-RNA + ATP = a 3'-end 2',3'-cyclophospho-ribonucleotide-RNA + AMP + diphosphate. Catalyzes the conversion of 3'-phosphate to a 2',3'-cyclic phosphodiester at the end of RNA. The mechanism of action of the enzyme occurs in 3 steps: (A) adenylation of the enzyme by ATP; (B) transfer of adenylate to an RNA-N3'P to produce RNA-N3'PP5'A; (C) and attack of the adjacent 2'-hydroxyl on the 3'-phosphorus in the diester linkage to produce the cyclic end product. The biological role of this enzyme is unknown but it is likely to function in some aspects of cellular RNA processing. The chain is RNA 3'-terminal phosphate cyclase from Escherichia coli O6:H1 (strain CFT073 / ATCC 700928 / UPEC).